A 541-amino-acid polypeptide reads, in one-letter code: Arginine--tRNA ligase (541 aa).

The short motif at 119 to 129 is the 'HIGH' region element; it reads ANPTGPLHIGH.

This sequence belongs to the class-I aminoacyl-tRNA synthetase family. Monomer.

The protein resides in the cytoplasm. It carries out the reaction tRNA(Arg) + L-arginine + ATP = L-arginyl-tRNA(Arg) + AMP + diphosphate. This chain is Arginine--tRNA ligase (argS), found in Helicobacter pylori (strain ATCC 700392 / 26695) (Campylobacter pylori).